The primary structure comprises 381 residues: S-adenosylmethionine synthase (381 aa).

His15 serves as a coordination point for ATP. Residue Asp17 coordinates Mg(2+). A K(+)-binding site is contributed by Glu43. L-methionine-binding residues include Glu56 and Gln99. The tract at residues 99-109 (QSLDIAQGVDN) is flexible loop. Residues 164 to 166 (DGK), 230 to 231 (RF), Asp239, 245 to 246 (RK), and Lys266 each bind ATP. Asp239 is a binding site for L-methionine. An L-methionine-binding site is contributed by Lys270.

Belongs to the AdoMet synthase family. As to quaternary structure, homotetramer; dimer of dimers. Requires Mg(2+) as cofactor. K(+) is required as a cofactor.

It is found in the cytoplasm. The enzyme catalyses L-methionine + ATP + H2O = S-adenosyl-L-methionine + phosphate + diphosphate. It functions in the pathway amino-acid biosynthesis; S-adenosyl-L-methionine biosynthesis; S-adenosyl-L-methionine from L-methionine: step 1/1. Its function is as follows. Catalyzes the formation of S-adenosylmethionine (AdoMet) from methionine and ATP. The overall synthetic reaction is composed of two sequential steps, AdoMet formation and the subsequent tripolyphosphate hydrolysis which occurs prior to release of AdoMet from the enzyme. The polypeptide is S-adenosylmethionine synthase (Legionella jeonii).